The chain runs to 256 residues: Small ribosomal subunit protein eS1 (256 aa).

The residue at position 2 (A2) is an N-acetylalanine; partial.

It belongs to the eukaryotic ribosomal protein eS1 family. Component of the small ribosomal subunit. Mature ribosomes consist of a small (40S) and a large (60S) subunit. The 40S subunit contains about 33 different proteins and 1 molecule of RNA (18S). The 60S subunit contains about 49 different proteins and 3 molecules of RNA (25S, 5.8S and 5S).

It is found in the cytoplasm. The sequence is that of Small ribosomal subunit protein eS1 from Coprinopsis cinerea (strain Okayama-7 / 130 / ATCC MYA-4618 / FGSC 9003) (Inky cap fungus).